The following is a 319-amino-acid chain: Acetyl-coenzyme A carboxylase carboxyl transferase subunit alpha (319 aa).

Residues 35–296 form the CoA carboxyltransferase C-terminal domain; it reads DLEKEIKQLE…KQRLLEQLKE (262 aa).

The protein belongs to the AccA family. In terms of assembly, acetyl-CoA carboxylase is a heterohexamer composed of biotin carboxyl carrier protein (AccB), biotin carboxylase (AccC) and two subunits each of ACCase subunit alpha (AccA) and ACCase subunit beta (AccD).

It localises to the cytoplasm. The enzyme catalyses N(6)-carboxybiotinyl-L-lysyl-[protein] + acetyl-CoA = N(6)-biotinyl-L-lysyl-[protein] + malonyl-CoA. Its pathway is lipid metabolism; malonyl-CoA biosynthesis; malonyl-CoA from acetyl-CoA: step 1/1. Its function is as follows. Component of the acetyl coenzyme A carboxylase (ACC) complex. First, biotin carboxylase catalyzes the carboxylation of biotin on its carrier protein (BCCP) and then the CO(2) group is transferred by the carboxyltransferase to acetyl-CoA to form malonyl-CoA. This Aliivibrio fischeri (strain ATCC 700601 / ES114) (Vibrio fischeri) protein is Acetyl-coenzyme A carboxylase carboxyl transferase subunit alpha.